The sequence spans 1386 residues: Roundabout homolog 3 (1386 aa).

An N-terminal signal peptide occupies residues 1–20 (MLRYLLKTLLQMNLFADSLA). Over 21–891 (GDISNSSELL…VRLARVLREP (871 aa)) the chain is Extracellular. N-linked (GlcNAc...) asparagine glycans are attached at residues asparagine 25, asparagine 34, asparagine 41, and asparagine 53. Ig-like C2-type domains follow at residues 64–160 (PRIV…ASLE), 166–253 (DDFR…AEVM), 258–342 (PSFL…GSLS), 347–440 (PQLV…ALLE), and 450–531 (PPVI…GEAT). Cysteine 85 and cysteine 143 are oxidised to a cystine. A glycan (N-linked (GlcNAc...) asparagine) is linked at asparagine 156. Disulfide bonds link cysteine 187–cysteine 236, cysteine 279–cysteine 326, and cysteine 368–cysteine 424. Residues asparagine 410, asparagine 459, and asparagine 503 are each glycosylated (N-linked (GlcNAc...) asparagine). Cysteine 472 and cysteine 521 are disulfide-bonded. Disordered regions lie at residues 541-563 (DWGVSPDPPTEPSSPPGAPSQPV) and 639-662 (EPSPVSEPVRTQDSSPSRPVEDPW). A compositionally biased stretch (pro residues) spans 546 to 559 (PDPPTEPSSPPGAP). Fibronectin type-III domains follow at residues 558–652 (APSQ…TQDS), 671–766 (VAVR…IPEE), and 771–869 (PPQG…SPPD). Asparagine 784, asparagine 813, and asparagine 820 each carry an N-linked (GlcNAc...) asparagine glycan. The helical transmembrane segment at 892–912 (AFLAGSGAACGALLLGLCAAL) threads the bilayer. The Cytoplasmic segment spans residues 913 to 1386 (YWRRKQRKEL…PGQKRREEPR (474 aa)). Disordered stretches follow at residues 965–989 (SWPHPSRSPSAQEPRGSCCPSNPDP), 1028–1310 (ELQT…AVPL), and 1327–1386 (SRPS…EEPR). A compositionally biased stretch (low complexity) spans 1067-1083 (VKLLGKPVQMPSLNWPE). Over residues 1099–1112 (GPEEELEGSSEPEE) the composition is skewed to acidic residues. Positions 1158-1169 (PSPPDPPQPPTD) are enriched in pro residues. Low complexity-rich tracts occupy residues 1178–1191 (RRVPLGPSSPLSVS) and 1202–1229 (PAGLGAGPAASPHLSPSPAPSTASSAPG). Serine 1263 carries the post-translational modification Phosphoserine. A compositionally biased stretch (basic and acidic residues) spans 1294-1304 (LERERSGERKA). Residues 1333 to 1344 (SRGQGTSTCSTA) show a composition bias toward polar residues. Positions 1345-1361 (GSNSSRGSSSSRGSRGP) are enriched in low complexity.

Belongs to the immunoglobulin superfamily. ROBO family. As to quaternary structure, monomer. Interacts (via Fibronectin type-III 1 domain) with NELL2 (via the EGF domains) with a 3:3 stoichiometry; this interaction promotes oligomerization of ROBO3 resulting in the repulsion of commissural axons in the midline.

It localises to the membrane. Receptor involved in axon guidance during development. Acts as a multifunctional regulator of pathfinding that simultaneously mediates NELL2 repulsion, inhibits SLIT repulsion, and facilitates Netrin-1/NTN1 attraction. In spinal cord development plays a role in guiding commissural axons probably by preventing premature sensitivity to Slit proteins thus inhibiting Slit signaling through ROBO1/ROBO2. Binding OF NELL2 to the receptor ROBO3 promotes oligomerization of ROBO3, resulting in the repulsion of commissural axons in the midline. ROBO3 also indirectly boosts axon attraction to NTN1 without interacting with NTN1 itself. The protein is Roundabout homolog 3 of Homo sapiens (Human).